Reading from the N-terminus, the 61-residue chain is Large ribosomal subunit protein bL32 (61 aa).

Residues 1–22 (MAVPKQKSSKSRGRKRRTHQKV) are disordered. Residues 7–20 (KSSKSRGRKRRTHQ) show a composition bias toward basic residues.

Belongs to the bacterial ribosomal protein bL32 family.

The sequence is that of Large ribosomal subunit protein bL32 from Desulforapulum autotrophicum (strain ATCC 43914 / DSM 3382 / VKM B-1955 / HRM2) (Desulfobacterium autotrophicum).